The following is a 496-amino-acid chain: Probable malate:quinone oxidoreductase (496 aa).

This sequence belongs to the MQO family. It depends on FAD as a cofactor.

It catalyses the reaction (S)-malate + a quinone = a quinol + oxaloacetate. Its pathway is carbohydrate metabolism; tricarboxylic acid cycle; oxaloacetate from (S)-malate (quinone route): step 1/1. The chain is Probable malate:quinone oxidoreductase from Flavobacterium psychrophilum (strain ATCC 49511 / DSM 21280 / CIP 103535 / JIP02/86).